The following is a 127-amino-acid chain: Turripeptide OL172 (127 aa).

An N-terminal signal peptide occupies residues 1–20 (MFSTLIFLTAVTLLMMPSQT). Residues 42 to 43 (QR) constitute a propeptide that is removed on maturation. Gln44 carries the pyrrolidone carboxylic acid modification. A propeptide spanning residues 73-75 (QRK) is cleaved from the precursor. Gln76 is modified (pyrrolidone carboxylic acid). Residues 104-106 (QRK) constitute a propeptide that is removed on maturation. Position 107 is a pyrrolidone carboxylic acid (Gln107).

Post-translationally, the turripeptide OL172 conotoxin-like contains 2 disulfide bonds. As to expression, expressed by the venom duct.

It localises to the secreted. Its function is as follows. Acts as a neurotoxin by inhibiting an ion channel. The chain is Turripeptide OL172 from Iotyrris olangoensis (Sea snail).